A 149-amino-acid chain; its full sequence is Putative pre-16S rRNA nuclease (149 aa).

Belongs to the YqgF nuclease family.

Its subcellular location is the cytoplasm. Could be a nuclease involved in processing of the 5'-end of pre-16S rRNA. This chain is Putative pre-16S rRNA nuclease, found in Burkholderia orbicola (strain MC0-3).